We begin with the raw amino-acid sequence, 372 residues long: Putative isochorismate synthase MenF (372 aa).

Residue K119 is the Proton acceptor of the active site. E175 acts as the Proton donor in catalysis. Residues E219 and E356 each coordinate Mg(2+).

This sequence belongs to the isochorismate synthase family. It depends on Mg(2+) as a cofactor.

It carries out the reaction chorismate = isochorismate. The protein operates within quinol/quinone metabolism; 1,4-dihydroxy-2-naphthoate biosynthesis; 1,4-dihydroxy-2-naphthoate from chorismate: step 1/7. Its pathway is quinol/quinone metabolism; menaquinone biosynthesis. Functionally, catalyzes the conversion of chorismate to isochorismate. This chain is Putative isochorismate synthase MenF (menF), found in Mycobacterium tuberculosis (strain CDC 1551 / Oshkosh).